The sequence spans 342 residues: Flap endonuclease 1 (342 aa).

Positions 1–99 are N-domain; the sequence is MGVKIGELIE…RAIEERVRAR (99 aa). Mg(2+) is bound by residues aspartate 28, aspartate 81, glutamate 153, glutamate 155, aspartate 174, aspartate 176, and aspartate 237. An I-domain region spans residues 117–259; sequence EARKYAQAAL…RALELVKKYK (143 aa).

Belongs to the XPG/RAD2 endonuclease family. FEN1 subfamily. As to quaternary structure, interacts with PCNA. PCNA stimulates the nuclease activity without altering cleavage specificity. Mg(2+) is required as a cofactor.

Structure-specific nuclease with 5'-flap endonuclease and 5'-3' exonuclease activities involved in DNA replication and repair. During DNA replication, cleaves the 5'-overhanging flap structure that is generated by displacement synthesis when DNA polymerase encounters the 5'-end of a downstream Okazaki fragment. Binds the unpaired 3'-DNA end and kinks the DNA to facilitate 5' cleavage specificity. Cleaves one nucleotide into the double-stranded DNA from the junction in flap DNA, leaving a nick for ligation. Also involved in the base excision repair (BER) pathway. Acts as a genome stabilization factor that prevents flaps from equilibrating into structures that lead to duplications and deletions. Also possesses 5'-3' exonuclease activity on nicked or gapped double-stranded DNA. This Korarchaeum cryptofilum (strain OPF8) protein is Flap endonuclease 1.